A 314-amino-acid polypeptide reads, in one-letter code: MNKGKIENIKDKIDGNELDLSLSNLTEVPVKELAAFPKATFLDLSCNNLITLTPEFCSLTHLIKIDLNKNQLVCLPEEIGQLVNLQHLDLYNNKLKMLPIGFSQLKSLKWLDLKDNPLEPTLAKAAGDCLDEKQCRQCASRVLQHMKVLQEEAEKELERRLLKEREQEKKKEAKQREKEAREKEAQKKKKAEEKERKRKEYQAQVAAVAAQEQQKKKKEEKKKKAAQNQGKKAAPESVPKAKRSICSLFFSLLLKLVLLLVIGVSSVVAVCQLTELRKEAFCIPLNVHFEETVRWAQGLDVVQQVIQKMSDLRT.

At methionine 1–serine 247 the chain is on the cytoplasmic side. 5 LRR repeats span residues aspartate 14–alanine 35, lysine 38–threonine 60, histidine 61–leucine 82, asparagine 84–lysine 106, and serine 107–alanine 126. Residues methionine 146–lysine 216 adopt a coiled-coil conformation. Disordered stretches follow at residues arginine 165 to lysine 197 and glutamate 212 to serine 237. A compositionally biased stretch (basic residues) spans lysine 215–alanine 225. A helical transmembrane segment spans residues leucine 248–valine 268. At alanine 269 to threonine 314 the chain is on the lumenal side.

In terms of assembly, interacts with SGO1.

The protein resides in the microsome membrane. Its subcellular location is the endoplasmic reticulum membrane. The protein localises to the nucleus envelope. Its function is as follows. Required for nuclear import of FGF1. The chain is Leucine-rich repeat-containing protein 59 (lrrc59) from Danio rerio (Zebrafish).